Reading from the N-terminus, the 1178-residue chain is DNA-directed RNA polymerase subunit beta (1178 aa).

The segment at 1–37 (MLEGCILPDFGQSKTDVSPSQSRPQSSPNNSVPGAPN) is disordered. Residues 17 to 33 (VSPSQSRPQSSPNNSVP) are compositionally biased toward low complexity.

It belongs to the RNA polymerase beta chain family. The RNAP catalytic core consists of 2 alpha, 1 beta, 1 beta' and 1 omega subunit. When a sigma factor is associated with the core the holoenzyme is formed, which can initiate transcription.

The enzyme catalyses RNA(n) + a ribonucleoside 5'-triphosphate = RNA(n+1) + diphosphate. In terms of biological role, DNA-dependent RNA polymerase catalyzes the transcription of DNA into RNA using the four ribonucleoside triphosphates as substrates. This chain is DNA-directed RNA polymerase subunit beta, found in Mycobacterium leprae (strain Br4923).